A 240-amino-acid polypeptide reads, in one-letter code: Ribonuclease PH (240 aa).

Residues Arg-87 and 125 to 127 (GTR) contribute to the phosphate site.

It belongs to the RNase PH family. As to quaternary structure, homohexameric ring arranged as a trimer of dimers.

The enzyme catalyses tRNA(n+1) + phosphate = tRNA(n) + a ribonucleoside 5'-diphosphate. Phosphorolytic 3'-5' exoribonuclease that plays an important role in tRNA 3'-end maturation. Removes nucleotide residues following the 3'-CCA terminus of tRNAs; can also add nucleotides to the ends of RNA molecules by using nucleoside diphosphates as substrates, but this may not be physiologically important. Probably plays a role in initiation of 16S rRNA degradation (leading to ribosome degradation) during starvation. This chain is Ribonuclease PH, found in Pseudomonas putida (strain GB-1).